We begin with the raw amino-acid sequence, 267 residues long: Hydrolase FUB4 (267 aa).

Residues serine 93, aspartate 183, and histidine 243 each act as charge relay system in the active site.

The protein belongs to the AB hydrolase 3 family.

The protein operates within mycotoxin biosynthesis. Functionally, hydrolase; part of the gene cluster that mediates the biosynthesis of fusaric acid, a mycotoxin with low to moderate toxicity to animals and humans, but with high phytotoxic properties. L-aspartate is suggested as fusaric acid amino acid precursor that is activated and further processed to O-acetyl-L-homoserine by cluster enzymes aspartate kinase FUB3 and homoserine O-acetyltransferase FUB5, as well as enzymes of the primary metabolism. The polyketide synthase (PKS) FUB1 generates the triketide trans-2-hexenal which is presumptively released by the hydrolase FUB4 and linked to the NRPS-bound amino acid precursor by NAD(P)-dependent dehydrogenase FUB6. FUB1, FUB4, and the non-canonical NRPS Fub8 may form an enzyme complex. Further processing of the NRPS-bound intermediate might be carried out by FUB6 and the sulfhydrylase FUB7, enabling a spontaneous electrocyclization to close the carbon backbone of fusaric acid. Dihydrofusaric acid is likely to be released via reduction by the thioester reductase (TR) domain of FUB8 whereupon the final oxidation to fusaric acid may (also) be performed by the FMN-dependent dehydrogenase FUB9. The chain is Hydrolase FUB4 from Fusarium oxysporum f. sp. lycopersici (strain 4287 / CBS 123668 / FGSC 9935 / NRRL 34936) (Fusarium vascular wilt of tomato).